The following is a 372-amino-acid chain: Dual-specificity RNA methyltransferase RlmN (372 aa).

The active-site Proton acceptor is Glu-93. Residues Glu-99–Asp-338 enclose the Radical SAM core domain. Residues Cys-106 and Cys-343 are joined by a disulfide bond. [4Fe-4S] cluster contacts are provided by Cys-113, Cys-117, and Cys-120. S-adenosyl-L-methionine-binding positions include Gly-167 to Glu-168, Ser-199, Ser-221 to His-223, and Asn-300. Cys-343 functions as the S-methylcysteine intermediate in the catalytic mechanism.

This sequence belongs to the radical SAM superfamily. RlmN family. The cofactor is [4Fe-4S] cluster.

It is found in the cytoplasm. The enzyme catalyses adenosine(2503) in 23S rRNA + 2 reduced [2Fe-2S]-[ferredoxin] + 2 S-adenosyl-L-methionine = 2-methyladenosine(2503) in 23S rRNA + 5'-deoxyadenosine + L-methionine + 2 oxidized [2Fe-2S]-[ferredoxin] + S-adenosyl-L-homocysteine. The catalysed reaction is adenosine(37) in tRNA + 2 reduced [2Fe-2S]-[ferredoxin] + 2 S-adenosyl-L-methionine = 2-methyladenosine(37) in tRNA + 5'-deoxyadenosine + L-methionine + 2 oxidized [2Fe-2S]-[ferredoxin] + S-adenosyl-L-homocysteine. Specifically methylates position 2 of adenine 2503 in 23S rRNA and position 2 of adenine 37 in tRNAs. m2A2503 modification seems to play a crucial role in the proofreading step occurring at the peptidyl transferase center and thus would serve to optimize ribosomal fidelity. This chain is Dual-specificity RNA methyltransferase RlmN, found in Psychromonas ingrahamii (strain DSM 17664 / CCUG 51855 / 37).